Reading from the N-terminus, the 544-residue chain is NADH-quinone oxidoreductase subunit C/D (544 aa).

Residues 1–138 are NADH dehydrogenase I subunit C; it reads MLNCDMLIDS…KGQICTETED (138 aa). The segment at 161–544 is NADH dehydrogenase I subunit D; sequence MLLNVGPSHP…MNFIAGEFDR (384 aa).

This sequence in the N-terminal section; belongs to the complex I 30 kDa subunit family. In the C-terminal section; belongs to the complex I 49 kDa subunit family. NDH-1 is composed of 13 different subunits. Subunits NuoB, CD, E, F, and G constitute the peripheral sector of the complex.

Its subcellular location is the cell inner membrane. The enzyme catalyses a quinone + NADH + 5 H(+)(in) = a quinol + NAD(+) + 4 H(+)(out). Functionally, NDH-1 shuttles electrons from NADH, via FMN and iron-sulfur (Fe-S) centers, to quinones in the respiratory chain. The immediate electron acceptor for the enzyme in this species is believed to be ubiquinone. Couples the redox reaction to proton translocation (for every two electrons transferred, four hydrogen ions are translocated across the cytoplasmic membrane), and thus conserves the redox energy in a proton gradient. This Aliarcobacter butzleri (strain RM4018) (Arcobacter butzleri) protein is NADH-quinone oxidoreductase subunit C/D.